The chain runs to 131 residues: Ribosome-binding factor A (131 aa).

The tract at residues 110-131 (QMNLGEDNEDNEDKENNDPGEE) is disordered. Residues 115-131 (EDNEDNEDKENNDPGEE) are compositionally biased toward acidic residues.

Belongs to the RbfA family. Monomer. Binds 30S ribosomal subunits, but not 50S ribosomal subunits or 70S ribosomes.

The protein localises to the cytoplasm. Functionally, one of several proteins that assist in the late maturation steps of the functional core of the 30S ribosomal subunit. Associates with free 30S ribosomal subunits (but not with 30S subunits that are part of 70S ribosomes or polysomes). Required for efficient processing of 16S rRNA. May interact with the 5'-terminal helix region of 16S rRNA. The chain is Ribosome-binding factor A from Natranaerobius thermophilus (strain ATCC BAA-1301 / DSM 18059 / JW/NM-WN-LF).